Consider the following 338-residue polypeptide: Holliday junction branch migration complex subunit RuvB (338 aa).

The interval 1–180 (MTRLVTPDIT…FGVISRLEFY (180 aa)) is large ATPase domain (RuvB-L). ATP contacts are provided by residues Leu-19, Arg-20, Gly-61, Lys-64, Thr-65, Thr-66, 127 to 129 (EDY), Arg-170, Tyr-180, and Arg-217. Thr-65 is a binding site for Mg(2+). The tract at residues 181-251 (TDDELTTIVT…VVDESLKLLE (71 aa)) is small ATPAse domain (RuvB-S). The interval 254–338 (EKGFDHMDRT…PPSSSQGNLF (85 aa)) is head domain (RuvB-H). DNA is bound by residues Arg-290, Arg-309, and Arg-314.

Belongs to the RuvB family. In terms of assembly, homohexamer. Forms an RuvA(8)-RuvB(12)-Holliday junction (HJ) complex. HJ DNA is sandwiched between 2 RuvA tetramers; dsDNA enters through RuvA and exits via RuvB. An RuvB hexamer assembles on each DNA strand where it exits the tetramer. Each RuvB hexamer is contacted by two RuvA subunits (via domain III) on 2 adjacent RuvB subunits; this complex drives branch migration. In the full resolvosome a probable DNA-RuvA(4)-RuvB(12)-RuvC(2) complex forms which resolves the HJ.

It localises to the cytoplasm. It carries out the reaction ATP + H2O = ADP + phosphate + H(+). The RuvA-RuvB-RuvC complex processes Holliday junction (HJ) DNA during genetic recombination and DNA repair, while the RuvA-RuvB complex plays an important role in the rescue of blocked DNA replication forks via replication fork reversal (RFR). RuvA specifically binds to HJ cruciform DNA, conferring on it an open structure. The RuvB hexamer acts as an ATP-dependent pump, pulling dsDNA into and through the RuvAB complex. RuvB forms 2 homohexamers on either side of HJ DNA bound by 1 or 2 RuvA tetramers; 4 subunits per hexamer contact DNA at a time. Coordinated motions by a converter formed by DNA-disengaged RuvB subunits stimulates ATP hydrolysis and nucleotide exchange. Immobilization of the converter enables RuvB to convert the ATP-contained energy into a lever motion, pulling 2 nucleotides of DNA out of the RuvA tetramer per ATP hydrolyzed, thus driving DNA branch migration. The RuvB motors rotate together with the DNA substrate, which together with the progressing nucleotide cycle form the mechanistic basis for DNA recombination by continuous HJ branch migration. Branch migration allows RuvC to scan DNA until it finds its consensus sequence, where it cleaves and resolves cruciform DNA. This is Holliday junction branch migration complex subunit RuvB from Geobacter metallireducens (strain ATCC 53774 / DSM 7210 / GS-15).